Consider the following 360-residue polypeptide: Lipid-A-disaccharide synthase (360 aa).

Belongs to the LpxB family.

It carries out the reaction a lipid X + a UDP-2-N,3-O-bis[(3R)-3-hydroxyacyl]-alpha-D-glucosamine = a lipid A disaccharide + UDP + H(+). It participates in bacterial outer membrane biogenesis; LPS lipid A biosynthesis. Functionally, condensation of UDP-2,3-diacylglucosamine and 2,3-diacylglucosamine-1-phosphate to form lipid A disaccharide, a precursor of lipid A, a phosphorylated glycolipid that anchors the lipopolysaccharide to the outer membrane of the cell. This is Lipid-A-disaccharide synthase from Helicobacter acinonychis (strain Sheeba).